Consider the following 166-residue polypeptide: Glycine-rich RNA-binding protein GRP1A (166 aa).

The 79-residue stretch at 8–86 (YRCFVGGLAW…RSITVNEAQS (79 aa)) folds into the RRM domain. The interval 68–166 (GMNGQDLDGR…YGGSGGGGGW (99 aa)) is disordered. Composition is skewed to gly residues over residues 88 to 146 (GSGG…YGGG) and 153 to 166 (EGGG…GGGW).

Predominantly expressed in meristematic and growing tissue.

It localises to the nucleus. Functionally, may play a general role in circadian phenomena associated with meristematic tissue. The protein is Glycine-rich RNA-binding protein GRP1A of Sinapis alba (White mustard).